The sequence spans 435 residues: tRNA modification GTPase MnmE (435 aa).

Residues Arg20, Glu77, and Lys117 each coordinate (6S)-5-formyl-5,6,7,8-tetrahydrofolate. The TrmE-type G domain maps to 214 to 359; sequence GIKVVIVGVP…FLKEIESFCL (146 aa). GTP contacts are provided by residues 224–229, 243–249, and 268–271; these read NSGKSS, TEEEGTT, and DTAG. Mg(2+)-binding residues include Ser228 and Thr249. Residue Lys435 coordinates (6S)-5-formyl-5,6,7,8-tetrahydrofolate.

The protein belongs to the TRAFAC class TrmE-Era-EngA-EngB-Septin-like GTPase superfamily. TrmE GTPase family. As to quaternary structure, homodimer. Heterotetramer of two MnmE and two MnmG subunits. Requires K(+) as cofactor.

It is found in the cytoplasm. Functionally, exhibits a very high intrinsic GTPase hydrolysis rate. Involved in the addition of a carboxymethylaminomethyl (cmnm) group at the wobble position (U34) of certain tRNAs, forming tRNA-cmnm(5)s(2)U34. The protein is tRNA modification GTPase MnmE of Bartonella bacilliformis (strain ATCC 35685 / KC583 / Herrer 020/F12,63).